A 373-amino-acid polypeptide reads, in one-letter code: GDP-mannose 4,6-dehydratase (373 aa).

Residues 9–14 (GVTGQD), 64–65 (DL), 86–90 (LGAMS), and Tyr101 contribute to the NADP(+) site. Thr133 is an active-site residue. Residues Glu135 and Tyr157 each act as nucleophile in the active site. NADP(+) contacts are provided by Lys161, His187, and Arg192.

This sequence belongs to the NAD(P)-dependent epimerase/dehydratase family. GDP-mannose 4,6-dehydratase subfamily. NADP(+) serves as cofactor.

It catalyses the reaction GDP-alpha-D-mannose = GDP-4-dehydro-alpha-D-rhamnose + H2O. It participates in nucleotide-sugar biosynthesis; GDP-L-fucose biosynthesis via de novo pathway; GDP-L-fucose from GDP-alpha-D-mannose: step 1/2. In terms of biological role, catalyzes the conversion of GDP-D-mannose to GDP-4-dehydro-6-deoxy-D-mannose. The protein is GDP-mannose 4,6-dehydratase of Escherichia coli O157:H7.